The chain runs to 1024 residues: MNRKKVDNRIRILIENGVAERQRSLFVVVGDRGKDQVVILHHMLSKATVKARPSVLWCYKKELGFSSHRKKRMRQLQKKIKSGTLNLKQDDPFELFVAATNIRYCYYNETHKILGNTFGMCVLQDFEALTPNLLARTVETVEGGGLVVILLRTMNSLKQLYTMTMDVHSRYRTEAHQDVVGRFNERFILSLASCKKCLVIDDQLDILPISSHVASIEALPPQAPDENLSPAALELLELKESLQDTQPVGVLVDCCKTLDQAKAVLKFIEGISEKTLRSTVALTAARGRGKSAALGLAIAGAVAFGYSNIFVTSPSPDNLHTLFEFVFKGFDALQYQEHLDYEIVQSLNPEFNKAVIRVNVFREHRQTIQYIHPADAVKLGQAELVVIDEAAAIPLPLVKSLLGPYLVFMASTINGYEGTGRSLSLKLIQQLRQQSAQSQVSTTAENKTTTTARLASARTLHEVSLQESIRYAPGDAVEKWLNDLLCLDCLNITRIVSGCPLPEACELYYVNRDTLFCYHKASEVFLQRLMALYVASHYKNSPNDLQMLSDAPAHHLFCLLPPVPPTQNALPEVLAVVQVCLEGEISRQSILNSLSRGKKASGDLIPWTVSEQFQDPDFGGLSGGRVVRIAVHPDYQGMGYGSRALQLLQMYYEGKFPCLEEKVLETPQEIRTVSSEAVSLLEEVITPRKDLPPLLLKLNERPAERLDYLGVSYGLTPRLLKFWKRAGFVPVYLRQTPNDLTGEHSCIMLKTLADEDEAEQGAWLAAFWKDFRRRFLALLSYQFSTFSPALSLNIIQNRNVAKSALPALGREHLEALFLPYDLKRLEMYSRNMVDYHLIMDLIPAISRLYFLNQLGDLSLSAAQSALLLGIGLQHKSVDQLEKEIELPSGQLMGLFNRIIRKVVKLFNDVQEKAIEEQMVAVKDVVMEPTMKTLSDDLDEAAKEFQEKHKKEVGKLKDMDLSQYVIRGDDEEWNEVLSKAGQNASIVSLKSDKKRKLETKQEPKQSKKLKKRDNNRKDMKLKRKK.

287–296 (GRGKSAALGL) contacts ATP. K426 bears the N6-acetyllysine mark. R470 lines the ATP pocket. The region spanning 558–753 (CLLPPVPPTQ…HSCIMLKTLA (196 aa)) is the N-acetyltransferase domain. Acetyl-CoA contacts are provided by residues 629 to 631 (IAV) and 636 to 642 (QGMGYGS). A required for localization to the nucleolus and midbody region spans residues 702–1024 (PAERLDYLGV…RKDMKLKRKK (323 aa)). T716 carries the post-translational modification Phosphothreonine. R725 is an acetyl-CoA binding site. Phosphoserine is present on residues S934, S984, and S987. The segment at 990–1024 (SDKKRKLETKQEPKQSKKLKKRDNNRKDMKLKRKK) is disordered. A compositionally biased stretch (basic residues) spans 1005–1024 (SKKLKKRDNNRKDMKLKRKK).

Belongs to the RNA cytidine acetyltransferase family. NAT10 subfamily. In terms of assembly, part of the small subunit (SSU) processome, composed of more than 70 proteins and the RNA chaperone small nucleolar RNA (snoRNA) U3. Interacts with THUMPD1. Interacts with SUN1 (via N-terminus). Interacts with TERT.

It is found in the nucleus. Its subcellular location is the nucleolus. It carries out the reaction a cytidine in 18S rRNA + acetyl-CoA + ATP + H2O = an N(4)-acetylcytidine in 18S rRNA + ADP + phosphate + CoA + H(+). It catalyses the reaction a cytidine in tRNA + acetyl-CoA + ATP + H2O = an N(4)-acetylcytidine in tRNA + ADP + phosphate + CoA + H(+). The catalysed reaction is a cytidine in mRNA + acetyl-CoA + ATP + H2O = an N(4)-acetylcytidine in mRNA + ADP + phosphate + CoA + H(+). In terms of biological role, RNA cytidine acetyltransferase that catalyzes the formation of N(4)-acetylcytidine (ac4C) modification on mRNAs, 18S rRNA and tRNAs. Catalyzes ac4C modification of a broad range of mRNAs, enhancing mRNA stability and translation. mRNA ac4C modification is frequently present within wobble cytidine sites and promotes translation efficiency. Mediates the formation of ac4C at position 1842 in 18S rRNA. May also catalyze the formation of ac4C at position 1337 in 18S rRNA. Required for early nucleolar cleavages of precursor rRNA at sites A0, A1 and A2 during 18S rRNA synthesis. Catalyzes the formation of ac4C in serine and leucine tRNAs. Requires the tRNA-binding adapter protein THUMPD1 for full tRNA acetyltransferase activity but not for 18S rRNA acetylation. In addition to RNA acetyltransferase activity, also able to acetylate lysine residues of proteins, such as histones, microtubules, p53/TP53 and MDM2, in vitro. The relevance of the protein lysine acetyltransferase activity is however unsure in vivo. Activates telomerase activity by stimulating the transcription of TERT, and may also regulate telomerase function by affecting the balance of telomerase subunit assembly, disassembly, and localization. Involved in the regulation of centrosome duplication by acetylating CENATAC during mitosis, promoting SASS6 proteasome degradation. Part of the small subunit (SSU) processome, first precursor of the small eukaryotic ribosomal subunit. During the assembly of the SSU processome in the nucleolus, many ribosome biogenesis factors, an RNA chaperone and ribosomal proteins associate with the nascent pre-rRNA and work in concert to generate RNA folding, modifications, rearrangements and cleavage as well as targeted degradation of pre-ribosomal RNA by the RNA exosome. The chain is RNA cytidine acetyltransferase from Mus musculus (Mouse).